A 130-amino-acid polypeptide reads, in one-letter code: Small ribosomal subunit protein uS9 (130 aa).

It belongs to the universal ribosomal protein uS9 family.

This Albidiferax ferrireducens (strain ATCC BAA-621 / DSM 15236 / T118) (Rhodoferax ferrireducens) protein is Small ribosomal subunit protein uS9.